Consider the following 474-residue polypeptide: tRNA-2-methylthio-N(6)-dimethylallyladenosine synthase (474 aa).

The region spanning 3–120 (KKLHIKTWGC…LPEMINSVRG (118 aa)) is the MTTase N-terminal domain. [4Fe-4S] cluster is bound by residues C12, C49, C83, C157, C161, and C164. The Radical SAM core domain occupies 143–375 (RAEGPTAFVS…QERINQQAMA (233 aa)). The TRAM domain maps to 378-441 (RRMLGTTQRI…PNSLRGKVVR (64 aa)).

Belongs to the methylthiotransferase family. MiaB subfamily. Monomer. [4Fe-4S] cluster serves as cofactor.

It localises to the cytoplasm. The enzyme catalyses N(6)-dimethylallyladenosine(37) in tRNA + (sulfur carrier)-SH + AH2 + 2 S-adenosyl-L-methionine = 2-methylsulfanyl-N(6)-dimethylallyladenosine(37) in tRNA + (sulfur carrier)-H + 5'-deoxyadenosine + L-methionine + A + S-adenosyl-L-homocysteine + 2 H(+). Functionally, catalyzes the methylthiolation of N6-(dimethylallyl)adenosine (i(6)A), leading to the formation of 2-methylthio-N6-(dimethylallyl)adenosine (ms(2)i(6)A) at position 37 in tRNAs that read codons beginning with uridine. In Salmonella paratyphi A (strain ATCC 9150 / SARB42), this protein is tRNA-2-methylthio-N(6)-dimethylallyladenosine synthase.